Reading from the N-terminus, the 260-residue chain is Carbonic anhydrase 3 (260 aa).

An N-acetylalanine modification is found at Ala2. The Alpha-carbonic anhydrase domain maps to 3–259; the sequence is KEWGYADHNG…IKGRIVKASF (257 aa). Ser29, Ser43, Ser50, and Ser55 each carry phosphoserine. The involved in proton transfer stretch occupies residues 64–67; that stretch reads KTCR. Thr73 is modified (phosphothreonine). The Zn(2+) site is built by His94, His96, and His119. Tyr127 carries the post-translational modification Phosphotyrosine. A Phosphothreonine modification is found at Thr176. S-glutathionyl cysteine is present on residues Cys182 and Cys187. Residue 198–199 coordinates substrate; that stretch reads TT. Thr216 is subject to Phosphothreonine. Ser219 carries the post-translational modification Phosphoserine.

It belongs to the alpha-carbonic anhydrase family. It depends on Zn(2+) as a cofactor. In terms of processing, S-thiolated both by thiol-disulfide exchange with glutathione disulfide and by oxyradical-initiated S-thiolation with reduced glutathione. S-glutathionylated in hepatocytes under oxidative stress.

The protein resides in the cytoplasm. It carries out the reaction hydrogencarbonate + H(+) = CO2 + H2O. Inhibited by acetazolamide. Functionally, reversible hydration of carbon dioxide. The polypeptide is Carbonic anhydrase 3 (Sus scrofa (Pig)).